An 88-amino-acid chain; its full sequence is ATP synthase F(0) complex subunit f, mitochondrial (88 aa).

Ala2 bears the N-acetylalanine mark. Ser3 bears the Phosphoserine mark. N6-acetyllysine is present on Lys16. The chain crosses the membrane as a helical span at residues 62-79; that stretch reads MVLAAYVFLNYCRSYKEL.

In terms of assembly, component of the ATP synthase complex composed at least of ATP5F1A/subunit alpha, ATP5F1B/subunit beta, ATP5MC1/subunit c (homooctomer), MT-ATP6/subunit a, MT-ATP8/subunit 8, ATP5ME/subunit e, ATP5MF/subunit f, ATP5MG/subunit g, ATP5MK/subunit k, ATP5MJ/subunit j, ATP5F1C/subunit gamma, ATP5F1D/subunit delta, ATP5F1E/subunit epsilon, ATP5PF/subunit F6, ATP5PB/subunit b, ATP5PD/subunit d, ATP5PO/subunit OSCP. ATP synthase complex consists of a soluble F(1) head domain (subunits alpha(3) and beta(3)) - the catalytic core - and a membrane F(0) domain - the membrane proton channel (subunits c, a, 8, e, f, g, k and j). These two domains are linked by a central stalk (subunits gamma, delta, and epsilon) rotating inside the F1 region and a stationary peripheral stalk (subunits F6, b, d, and OSCP).

It localises to the mitochondrion. The protein resides in the mitochondrion inner membrane. Functionally, subunit f, of the mitochondrial membrane ATP synthase complex (F(1)F(0) ATP synthase or Complex V) that produces ATP from ADP in the presence of a proton gradient across the membrane which is generated by electron transport complexes of the respiratory chain. ATP synthase complex consist of a soluble F(1) head domain - the catalytic core - and a membrane F(1) domain - the membrane proton channel. These two domains are linked by a central stalk rotating inside the F(1) region and a stationary peripheral stalk. During catalysis, ATP synthesis in the catalytic domain of F(1) is coupled via a rotary mechanism of the central stalk subunits to proton translocation. In vivo, can only synthesize ATP although its ATP hydrolase activity can be activated artificially in vitro. Part of the complex F(0) domain. This is ATP synthase F(0) complex subunit f, mitochondrial from Bos taurus (Bovine).